The following is a 526-amino-acid chain: Peptide chain release factor 3 (526 aa).

Residues 9–277 (DKRRTFAIIS…GIVEWAPKPL (269 aa)) enclose the tr-type G domain. GTP-binding positions include 18–25 (SHPDAGKT), 86–90 (DTPGH), and 140–143 (NKLD).

This sequence belongs to the TRAFAC class translation factor GTPase superfamily. Classic translation factor GTPase family. PrfC subfamily.

The protein localises to the cytoplasm. Its function is as follows. Increases the formation of ribosomal termination complexes and stimulates activities of RF-1 and RF-2. It binds guanine nucleotides and has strong preference for UGA stop codons. It may interact directly with the ribosome. The stimulation of RF-1 and RF-2 is significantly reduced by GTP and GDP, but not by GMP. The polypeptide is Peptide chain release factor 3 (Shewanella putrefaciens (strain CN-32 / ATCC BAA-453)).